We begin with the raw amino-acid sequence, 333 residues long: Anthranilate phosphoribosyltransferase (333 aa).

5-phospho-alpha-D-ribose 1-diphosphate-binding positions include glycine 81, 84 to 85 (GD), threonine 89, 91 to 94 (NIST), 109 to 117 (KHGNRSVSS), and alanine 121. Glycine 81 contacts anthranilate. Serine 93 provides a ligand contact to Mg(2+). Asparagine 112 is a binding site for anthranilate. Residue arginine 167 coordinates anthranilate. Mg(2+) is bound by residues aspartate 225 and glutamate 226.

The protein belongs to the anthranilate phosphoribosyltransferase family. In terms of assembly, homodimer. It depends on Mg(2+) as a cofactor.

The catalysed reaction is N-(5-phospho-beta-D-ribosyl)anthranilate + diphosphate = 5-phospho-alpha-D-ribose 1-diphosphate + anthranilate. It participates in amino-acid biosynthesis; L-tryptophan biosynthesis; L-tryptophan from chorismate: step 2/5. Its function is as follows. Catalyzes the transfer of the phosphoribosyl group of 5-phosphorylribose-1-pyrophosphate (PRPP) to anthranilate to yield N-(5'-phosphoribosyl)-anthranilate (PRA). This is Anthranilate phosphoribosyltransferase from Haemophilus influenzae (strain PittEE).